Reading from the N-terminus, the 466-residue chain is Rhodanese-like domain-containing protein 4, chloroplastic (466 aa).

Residues 1-15 (MEALKTATFSPMSVL) constitute a chloroplast transit peptide. The disordered stretch occupies residues 1–35 (MEALKTATFSPMSVLSEKRSEPRKPFSLPNLFPPK). Residues 16–69 (SEKRSEPRKPFSLPNLFPPKSQRPISQESFLKRFNGGLALLTSVLSSATAPAKS) constitute a thylakoid transit peptide. The helical transmembrane segment at 103–123 (PLVIAGGVAALAVPFVLSQVL) threads the bilayer. Positions 144–250 (TDDNAQLLDI…WLNSSLPWIE (107 aa)) constitute a Rhodanese domain. Residues 277–297 (VSVALGVAAAAGLSVFAFTEI) form a helical membrane-spanning segment. Residues 373–384 (EAESATATTTTV) are compositionally biased toward low complexity. Disordered regions lie at residues 373-392 (EAESATATTTTVDKPVPEPE) and 426-466 (AQVI…PSQP). Residues 455-466 (LKPPSSPMPSQP) show a composition bias toward pro residues.

In terms of assembly, component of high molecular weight thylakoid LFNRs-containing protein complexes containing LIR1, LFNR1, LFNR2, TIC62 and TROL proteins. Expressed in leaves and stems, and at lower levels in flowers and siliques (at protein level).

It is found in the plastid. Its subcellular location is the chloroplast envelope. The protein localises to the chloroplast thylakoid membrane. In terms of biological role, rhodanese domain-containing protein required for anchoring ferredoxin--NADP reductase to the thylakoid membranes and sustaining efficient linear electron flow (LEF). The protein is Rhodanese-like domain-containing protein 4, chloroplastic of Arabidopsis thaliana (Mouse-ear cress).